Here is a 467-residue protein sequence, read N- to C-terminus: Amino-acid permease RocE (467 aa).

The next 12 membrane-spanning stretches (helical) occupy residues 21–41 (FMIS…GFTI), 47–67 (LGAV…MLCL), 87–107 (FISP…WAVT), 122–142 (WFPH…MFIL), 162–182 (ILII…LIDL), 207–227 (MLIT…IGVA), 246–266 (VWRT…MIPW), 283–303 (IGIP…LLSV), 336–356 (VPMY…LTKF), 361–381 (TVYM…WITI), 409–429 (YPVL…SLAF), and 435–455 (IALY…HVVI).

This sequence belongs to the amino acid-polyamine-organocation (APC) superfamily. Amino acid transporter (AAT) (TC 2.A.3.1) family.

It is found in the cell membrane. Putative transport protein involved in arginine degradative pathway. Probably transports arginine or ornithine. The chain is Amino-acid permease RocE from Bacillus subtilis (strain 168).